A 367-amino-acid chain; its full sequence is Protein trichome birefringence-like 39 (367 aa).

Residues G7–N29 traverse the membrane as a helical; Signal-anchor for type II membrane protein segment. Residues G120 to S122 carry the GDS motif motif. The short motif at D343–N357 is the DCXHWCLPGXXDXWN motif element.

It belongs to the PC-esterase family. TBL subfamily.

It localises to the membrane. Its function is as follows. May act as a bridging protein that binds pectin and other cell wall polysaccharides. Probably involved in maintaining esterification of pectins. May be involved in the specific O-acetylation of cell wall polymers. The polypeptide is Protein trichome birefringence-like 39 (TBL39) (Arabidopsis thaliana (Mouse-ear cress)).